A 376-amino-acid chain; its full sequence is Alcohol dehydrogenase class-3 (376 aa).

The residue at position 1 (Ser-1) is an N-acetylserine. Residues Cys-47, His-69, Cys-99, Cys-102, Cys-105, Cys-113, and Cys-176 each contribute to the Zn(2+) site.

Belongs to the zinc-containing alcohol dehydrogenase family. Class-III subfamily. As to quaternary structure, homodimer. The cofactor is Zn(2+). In terms of tissue distribution, liver and gut.

The protein localises to the cytoplasm. The enzyme catalyses a primary alcohol + NAD(+) = an aldehyde + NADH + H(+). The catalysed reaction is a secondary alcohol + NAD(+) = a ketone + NADH + H(+). It carries out the reaction S-(hydroxymethyl)glutathione + NADP(+) = S-formylglutathione + NADPH + H(+). It catalyses the reaction S-(hydroxymethyl)glutathione + NAD(+) = S-formylglutathione + NADH + H(+). The enzyme catalyses S-nitrosoglutathione + NADH + H(+) = S-(hydroxysulfenamide)glutathione + NAD(+). Its function is as follows. Class-III ADH is remarkably ineffective in oxidizing ethanol, but it readily catalyzes the oxidation of long-chain primary alcohols and the oxidation of S-(hydroxymethyl) glutathione. Also acts as a S-nitroso-glutathione reductase by catalyzing the NADH-dependent reduction of S-nitrosoglutathione, thereby regulating protein S-nitrosylation. The chain is Alcohol dehydrogenase class-3 from Myxine glutinosa (Atlantic hagfish).